The primary structure comprises 138 residues: Translation initiation factor 2 subunit beta (138 aa).

This sequence belongs to the eIF-2-beta/eIF-5 family. In terms of assembly, heterotrimer composed of an alpha, a beta and a gamma chain.

EIF-2 functions in the early steps of protein synthesis by forming a ternary complex with GTP and initiator tRNA. The chain is Translation initiation factor 2 subunit beta from Methanococcus maripaludis (strain DSM 14266 / JCM 13030 / NBRC 101832 / S2 / LL).